Reading from the N-terminus, the 574-residue chain is Proline--tRNA ligase (574 aa).

Belongs to the class-II aminoacyl-tRNA synthetase family. ProS type 1 subfamily. As to quaternary structure, homodimer.

Its subcellular location is the cytoplasm. The enzyme catalyses tRNA(Pro) + L-proline + ATP = L-prolyl-tRNA(Pro) + AMP + diphosphate. Functionally, catalyzes the attachment of proline to tRNA(Pro) in a two-step reaction: proline is first activated by ATP to form Pro-AMP and then transferred to the acceptor end of tRNA(Pro). As ProRS can inadvertently accommodate and process non-cognate amino acids such as alanine and cysteine, to avoid such errors it has two additional distinct editing activities against alanine. One activity is designated as 'pretransfer' editing and involves the tRNA(Pro)-independent hydrolysis of activated Ala-AMP. The other activity is designated 'posttransfer' editing and involves deacylation of mischarged Ala-tRNA(Pro). The misacylated Cys-tRNA(Pro) is not edited by ProRS. This is Proline--tRNA ligase from Nitrosococcus oceani (strain ATCC 19707 / BCRC 17464 / JCM 30415 / NCIMB 11848 / C-107).